We begin with the raw amino-acid sequence, 1322 residues long: Chitin synthase chs-1 (1322 aa).

At 1-39 the chain is on the extracellular side; the sequence is MNDGENYWNAFRSHKRSATDGPTLSPWMVTVLQATKLLL. A helical membrane pass occupies residues 40-60; the sequence is FALCNIVLTLGSVFSKLIVLI. At 61 to 128 the chain is on the cytoplasmic side; sequence MATNIVPRAH…KGQCGQLVKS (68 aa). Residues 129–149 traverse the membrane as a helical segment; that stretch reads VVVLESLRAIGLAVLSFHVFP. The Extracellular portion of the chain corresponds to 150 to 156; sequence QLDLARC. Residues 157-177 form a helical membrane-spanning segment; that stretch reads LVLSACFPLVAVLQRSLVAMV. Over 178–193 the chain is Cytoplasmic; that stretch reads SAARTGRSFRNRLGRC. Residues 194–214 form a helical membrane-spanning segment; that stretch reads FVAIPHVIMFLVLMSSCYVWA. The Extracellular segment spans residues 215-221; it reads LFDNKFT. A helical transmembrane segment spans residues 222–242; that stretch reads AIIALPIGVICTSAGFWESWI. The Cytoplasmic portion of the chain corresponds to 243-269; it reads DTTHSGTSFDELYRLKYAVRKMNTTTK. The helical transmembrane segment at 270 to 290 threads the bilayer; the sequence is LIVSLMRIVCTVSVLVSAVYI. Residues 291-316 lie on the Extracellular side of the membrane; sequence NDHKKLNSSHFVKAFFSFSTRQPHTR. An N-linked (GlcNAc...) asparagine glycan is attached at Asn297. A helical membrane pass occupies residues 317–337; it reads LLLLATGIIVLHFVMRGISRF. Over 338–342 the chain is Cytoplasmic; the sequence is LAALD. The helical transmembrane segment at 343–363 threads the bilayer; sequence LHPFSFVHPLSIAPLIAYGYV. The Extracellular segment spans residues 364–396; sequence RYACQSPTCSIARRLARFGLHWVCDQWFQSARG. The helical transmembrane segment at 397–417 threads the bilayer; it reads IASPDFYICLIWLLVGCYRGW. At 418–836 the chain is on the cytoplasmic side; sequence RLVRQRYFDT…AISYAYIAYQ (419 aa). A coiled-coil region spans residues 455–486; that stretch reads LNRQEKTMLTEEEDISDENDELRIRNDEVDRV. Residues 837 to 857 traverse the membrane as a helical segment; that stretch reads FLVIFFSMLGPAIIFTMLVFA. Over 858–865 the chain is Extracellular; the sequence is QVAAFELR. The helical transmembrane segment at 866-886 threads the bilayer; sequence GSDVMLYNGIPIGFFIVLCFT. Topologically, residues 887–892 are cytoplasmic; it reads TESNIQ. Residues 893–913 form a helical membrane-spanning segment; sequence LIYAKYMSIAYAFVMLAVLVA. Over 914 to 922 the chain is Extracellular; the sequence is TSSQIVLET. Residues 923–943 traverse the membrane as a helical segment; it reads VLAPTSLFIVTMVGIFFFAAC. Topologically, residues 944 to 951 are cytoplasmic; that stretch reads LHPKEFTN. Residues 952 to 972 traverse the membrane as a helical segment; it reads IIHGVVFFLMIPSTYVFLTLY. Residues 973–1148 lie on the Extracellular side of the membrane; the sequence is SLINLNVITW…AVAEGLASLR (176 aa). Residues 1019–1053 adopt a coiled-coil conformation; that stretch reads ISCREKKEHEERREKMEKKMQRMELALRSIESGAD. Residues 1149-1169 form a helical membrane-spanning segment; sequence NQIAFTILLVNSLLALAIFLI. Residues 1170 to 1209 lie on the Cytoplasmic side of the membrane; sequence QKHKNVLSIKFSPIKNFRWTKMNEMTGQYEETDEPLKIDP. Residues 1210-1230 traverse the membrane as a helical segment; the sequence is LGMGIVVFLLIILFVQTLGML. Over 1231–1322 the chain is Extracellular; that stretch reads LHRLNTMIGA…MQRSALSTTE (92 aa).

The protein belongs to the chitin synthase family. Class IV subfamily.

Its subcellular location is the cell membrane. The enzyme catalyses [(1-&gt;4)-N-acetyl-beta-D-glucosaminyl](n) + UDP-N-acetyl-alpha-D-glucosamine = [(1-&gt;4)-N-acetyl-beta-D-glucosaminyl](n+1) + UDP + H(+). Its function is as follows. Essential for the embryonic synthesis of chitin, a component of the eggshell. The sequence is that of Chitin synthase chs-1 from Caenorhabditis elegans.